The primary structure comprises 167 residues: Ribonuclease P protein subunit p20 (167 aa).

The tract at residues 1 to 36 is disordered; the sequence is MMGSNYPEHGTKPRSAKYHKQQNHRVVRKQPPRPAV. Basic residues predominate over residues 12 to 31; the sequence is KPRSAKYHKQQNHRVVRKQP.

In terms of assembly, interacts with Smn.

Its subcellular location is the nucleus. It localises to the nucleolus. The protein localises to the cytoplasm. The protein resides in the cytoplasmic granule. Functionally, component of ribonuclease P, a protein complex that generates mature tRNA molecules by cleaving their 5'-ends. Also a component of RNase MRP complex, which cleaves pre-rRNA sequences. This Drosophila melanogaster (Fruit fly) protein is Ribonuclease P protein subunit p20.